The chain runs to 117 residues: Large ribosomal subunit protein uL18 (117 aa).

The protein belongs to the universal ribosomal protein uL18 family. Part of the 50S ribosomal subunit; part of the 5S rRNA/L5/L18/L25 subcomplex. Contacts the 5S and 23S rRNAs.

This is one of the proteins that bind and probably mediate the attachment of the 5S RNA into the large ribosomal subunit, where it forms part of the central protuberance. This Vibrio vulnificus (strain CMCP6) protein is Large ribosomal subunit protein uL18.